Here is a 201-residue protein sequence, read N- to C-terminus: Putative manganese efflux pump MntP (201 aa).

The next 6 helical transmembrane spans lie at 3-23, 39-59, 65-85, 116-136, 141-161, and 176-196; these read LVSI…VSIT, IGLF…SIGI, IAAL…GKMI, LTLL…SFAF, IINT…IGVM, and ILGG…HTNI.

This sequence belongs to the MntP (TC 9.B.29) family.

The protein resides in the cell membrane. Its function is as follows. Probably functions as a manganese efflux pump. The sequence is that of Putative manganese efflux pump MntP from Clostridium botulinum (strain Loch Maree / Type A3).